The following is a 541-amino-acid chain: Carboxypeptidase Y homolog A (541 aa).

The signal sequence occupies residues 1–17 (MKVATSALLIGAAAAQQ). A propeptide spanning residues 18-125 (QQILKFPDSF…KLEQYSLRAK (108 aa)) is cleaved from the precursor. Intrachain disulfides connect Cys179-Cys418, Cys313-Cys327, Cys337-Cys360, Cys344-Cys353, and Cys382-Cys388. N-linked (GlcNAc...) asparagine glycosylation occurs at Asn210. The active site involves Ser266. Asp457 is a catalytic residue. The N-linked (GlcNAc...) asparagine glycan is linked to Asn505. The active site involves His516.

It belongs to the peptidase S10 family.

It localises to the vacuole. It catalyses the reaction Release of a C-terminal amino acid with broad specificity.. Its function is as follows. Vacuolar carboxypeptidase involved in degradation of small peptides. Digests preferentially peptides containing an aliphatic or hydrophobic residue in P1' position, as well as methionine, leucine or phenylalanine in P1 position of ester substrate. The sequence is that of Carboxypeptidase Y homolog A (cpyA) from Pyrenophora tritici-repentis (strain Pt-1C-BFP) (Wheat tan spot fungus).